Reading from the N-terminus, the 31-residue chain is Delta-actitoxin-Dar1b (31 aa).

The protein belongs to the sea anemone short toxin (type III) family. Contains 4 disulfide bonds.

It localises to the secreted. The protein localises to the nematocyst. Binds specifically to voltage-gated sodium channels (Nav), thereby delaying their inactivation during signal transduction. In Dofleinia armata (Armed anemone), this protein is Delta-actitoxin-Dar1b.